The following is a 363-amino-acid chain: Flagellar P-ring protein (363 aa).

An N-terminal signal peptide occupies residues 1 to 20 (MKLKLILAVAMLAFSLPSQA).

The protein belongs to the FlgI family. The basal body constitutes a major portion of the flagellar organelle and consists of four rings (L,P,S, and M) mounted on a central rod.

It is found in the periplasm. Its subcellular location is the bacterial flagellum basal body. In terms of biological role, assembles around the rod to form the L-ring and probably protects the motor/basal body from shearing forces during rotation. This chain is Flagellar P-ring protein, found in Shewanella sp. (strain MR-7).